The primary structure comprises 391 residues: Oocyte zinc finger protein XlCOF7.2 (391 aa).

4 C2H2-type zinc fingers span residues 284–306 (FPCSECGKCFINQSTLARHYRTH), 312–334 (YPCSECGKCFASSTYLRDHRRIH), 340–362 (SSCSECGKYFLNCWSLARHHRTH), and 368–391 (YSCSECGKSFAISSDLAGHRRRTH).

This sequence belongs to the krueppel C2H2-type zinc-finger protein family.

It localises to the nucleus. In terms of biological role, may be involved in transcriptional regulation. The chain is Oocyte zinc finger protein XlCOF7.2 from Xenopus laevis (African clawed frog).